A 90-amino-acid polypeptide reads, in one-letter code: Secretoglobin family 1D member 2 (90 aa).

Positions 1 to 21 (MKLSVCLLLVTLALCCYQANA) are cleaved as a signal peptide.

It belongs to the secretoglobin family. Lipophilin subfamily. As to expression, highest expression was found in skeletal muscle. Expressed as well in thymus, trachea, kidney, steroid responsive tissues (prostate, testis, uterus, breast and ovary) and salivary gland.

The protein localises to the secreted. In terms of biological role, may bind androgens and other steroids, may also bind estramustine, a chemotherapeutic agent used for prostate cancer. May be under transcriptional regulation of steroid hormones. This is Secretoglobin family 1D member 2 (SCGB1D2) from Homo sapiens (Human).